The chain runs to 137 residues: Altered inheritance of mitochondria protein 11 (137 aa).

2 helical membrane-spanning segments follow: residues Tyr20–Ile37 and Leu66–Leu88.

Belongs to the AIM11 family.

The protein localises to the membrane. In Saccharomyces cerevisiae (strain YJM789) (Baker's yeast), this protein is Altered inheritance of mitochondria protein 11 (AIM11).